The sequence spans 483 residues: Acetyl-coenzyme A carboxylase carboxyl transferase subunit beta, chloroplastic (483 aa).

Residues 221 to 483 form the CoA carboxyltransferase N-terminal domain; it reads LWVQCENCYG…FQFHGFFPRP (263 aa). Zn(2+) is bound by residues C225, C228, C244, and C247. A C4-type zinc finger spans residues 225–247; the sequence is CENCYGLNYKKFFSSKMNICEQC.

The protein belongs to the AccD/PCCB family. As to quaternary structure, acetyl-CoA carboxylase is a heterohexamer composed of biotin carboxyl carrier protein, biotin carboxylase and 2 subunits each of ACCase subunit alpha and ACCase plastid-coded subunit beta (accD). Requires Zn(2+) as cofactor.

It localises to the plastid. The protein resides in the chloroplast stroma. It carries out the reaction N(6)-carboxybiotinyl-L-lysyl-[protein] + acetyl-CoA = N(6)-biotinyl-L-lysyl-[protein] + malonyl-CoA. It functions in the pathway lipid metabolism; malonyl-CoA biosynthesis; malonyl-CoA from acetyl-CoA: step 1/1. Its function is as follows. Component of the acetyl coenzyme A carboxylase (ACC) complex. Biotin carboxylase (BC) catalyzes the carboxylation of biotin on its carrier protein (BCCP) and then the CO(2) group is transferred by the transcarboxylase to acetyl-CoA to form malonyl-CoA. This chain is Acetyl-coenzyme A carboxylase carboxyl transferase subunit beta, chloroplastic, found in Nuphar advena (Common spatterdock).